The chain runs to 177 residues: uncharacterized protein (177 aa).

Positions 100–115 (QVQPHQQTHQQSQQTH) are enriched in low complexity. A disordered region spans residues 100-135 (QVQPHQQTHQQSQQTHNKTVANSGDPPPPPPSQPNK). Residues 141-158 (WIVGMVIGVVVLYLLYRY) traverse the membrane as a helical segment.

The protein localises to the membrane. This is an uncharacterized protein from Aedes vexans (Inland floodwater mosquito).